A 292-amino-acid polypeptide reads, in one-letter code: Formamidopyrimidine-DNA glycosylase (292 aa).

Pro2 (schiff-base intermediate with DNA) is an active-site residue. Glu3 serves as the catalytic Proton donor. Lys60 serves as the catalytic Proton donor; for beta-elimination activity. DNA contacts are provided by His109, Arg128, and Lys173. The FPG-type zinc finger occupies 258-292 (NVYRRTGKKCRQCKNLIERQKISGRSTHWCRKCQK). Arg282 serves as the catalytic Proton donor; for delta-elimination activity.

This sequence belongs to the FPG family. In terms of assembly, monomer. Zn(2+) is required as a cofactor.

The enzyme catalyses Hydrolysis of DNA containing ring-opened 7-methylguanine residues, releasing 2,6-diamino-4-hydroxy-5-(N-methyl)formamidopyrimidine.. It catalyses the reaction 2'-deoxyribonucleotide-(2'-deoxyribose 5'-phosphate)-2'-deoxyribonucleotide-DNA = a 3'-end 2'-deoxyribonucleotide-(2,3-dehydro-2,3-deoxyribose 5'-phosphate)-DNA + a 5'-end 5'-phospho-2'-deoxyribonucleoside-DNA + H(+). Involved in base excision repair of DNA damaged by oxidation or by mutagenic agents. Acts as a DNA glycosylase that recognizes and removes damaged bases. Has a preference for oxidized purines, such as 7,8-dihydro-8-oxoguanine (8-oxoG). Has AP (apurinic/apyrimidinic) lyase activity and introduces nicks in the DNA strand. Cleaves the DNA backbone by beta-delta elimination to generate a single-strand break at the site of the removed base with both 3'- and 5'-phosphates. The sequence is that of Formamidopyrimidine-DNA glycosylase from Prochlorococcus marinus subsp. pastoris (strain CCMP1986 / NIES-2087 / MED4).